The primary structure comprises 230 residues: Orotidine 5'-phosphate decarboxylase (230 aa).

Substrate-binding positions include Asp11, Lys34, 61-70 (DLKLHDIPNT), Thr117, Arg179, Gln188, Gly208, and Arg209. The Proton donor role is filled by Lys63.

It belongs to the OMP decarboxylase family. Type 1 subfamily. As to quaternary structure, homodimer.

The enzyme catalyses orotidine 5'-phosphate + H(+) = UMP + CO2. The protein operates within pyrimidine metabolism; UMP biosynthesis via de novo pathway; UMP from orotate: step 2/2. Functionally, catalyzes the decarboxylation of orotidine 5'-monophosphate (OMP) to uridine 5'-monophosphate (UMP). This is Orotidine 5'-phosphate decarboxylase from Streptococcus gordonii (strain Challis / ATCC 35105 / BCRC 15272 / CH1 / DL1 / V288).